The primary structure comprises 58 residues: MSKIVVRKNESLDDALRRFKRSVTKAGTLQEARKREHYEKPSVKRKRKSEAARKRKKI.

The interval 24-58 (TKAGTLQEARKREHYEKPSVKRKRKSEAARKRKKI) is disordered. A compositionally biased stretch (basic and acidic residues) spans 31–42 (EARKREHYEKPS). The segment covering 43-58 (VKRKRKSEAARKRKKI) has biased composition (basic residues).

This sequence belongs to the bacterial ribosomal protein bS21 family.

The sequence is that of Small ribosomal subunit protein bS21 from Streptococcus thermophilus (strain CNRZ 1066).